The following is a 687-amino-acid chain: Dictomallein (687 aa).

2 disordered regions span residues 1-45 (MGNG…SRRL) and 73-112 (TAGG…STSA). The region spanning 233-501 (PVFGTDADVQ…QAWIASRVLA (269 aa)) is the Peptidase M66 domain. Zn(2+) is bound at residue histidine 393. The active site involves glutamate 394. Zn(2+) contacts are provided by histidine 397 and histidine 403.

It belongs to the dictomallein family. Zn(2+) is required as a cofactor.

This chain is Dictomallein (dtmL), found in Burkholderia mallei (strain NCTC 10247).